A 310-amino-acid chain; its full sequence is Olfactory receptor 9Q1 (310 aa).

Topologically, residues 1-25 are extracellular; the sequence is MAEMNLTLVTEFLLIAFTEYPEWAL. N5 carries an N-linked (GlcNAc...) asparagine glycan. The chain crosses the membrane as a helical span at residues 26–46; that stretch reads PLFLLFLFMYLITVLGNLEMI. At 47 to 54 the chain is on the cytoplasmic side; it reads ILILMDHQ. A helical transmembrane segment spans residues 55–75; that stretch reads LHAPMYFLLSHLAFMDVCYSS. The Extracellular segment spans residues 76–99; the sequence is ITVPQMLAVLLEHGAALSYTRCAA. Residues C97 and C189 are joined by a disulfide bond. Residues 100 to 120 form a helical membrane-spanning segment; the sequence is QFFLFTFFGSIDCYLLALMAY. The Cytoplasmic portion of the chain corresponds to 121-139; that stretch reads DRYLAVCQPLLYVTILTQQ. Residues 140–160 form a helical membrane-spanning segment; that stretch reads ARLSLVAGAYVAGLISALVRT. Topologically, residues 161–197 are extracellular; sequence VSAFTLSFCGTSEIDFIFCDLPPLLKLTCGESYTQEV. Residues 198–217 form a helical membrane-spanning segment; that stretch reads LIIMFAIFVIPASMVVILVS. Residues 218–236 are Cytoplasmic-facing; sequence YLFIIVAIMGIPAGSQAKT. The helical transmembrane segment at 237 to 257 threads the bilayer; the sequence is FSTCTSHLTAVSLFFGTLIFM. Over 258-270 the chain is Extracellular; sequence YLRGNSDQSSEKN. Residues 271–291 form a helical membrane-spanning segment; it reads RVVSVLYTEVIPMLNPLIYSL. Residues 292–310 are Cytoplasmic-facing; sequence RNKEVKEALRKILNRAKLS.

The protein belongs to the G-protein coupled receptor 1 family.

The protein resides in the cell membrane. Its function is as follows. Odorant receptor. In Homo sapiens (Human), this protein is Olfactory receptor 9Q1 (OR9Q1).